The chain runs to 207 residues: Urease accessory protein UreG (207 aa).

Position 16–23 (16–23 (GPVGSGKT)) interacts with GTP.

Belongs to the SIMIBI class G3E GTPase family. UreG subfamily. In terms of assembly, homodimer. UreD, UreF and UreG form a complex that acts as a GTP-hydrolysis-dependent molecular chaperone, activating the urease apoprotein by helping to assemble the nickel containing metallocenter of UreC. The UreE protein probably delivers the nickel.

The protein resides in the cytoplasm. Functionally, facilitates the functional incorporation of the urease nickel metallocenter. This process requires GTP hydrolysis, probably effectuated by UreG. This is Urease accessory protein UreG from Cupriavidus metallidurans (strain ATCC 43123 / DSM 2839 / NBRC 102507 / CH34) (Ralstonia metallidurans).